A 4699-amino-acid chain; its full sequence is PKS-NRPS hybrid synthetase cheA (4699 aa).

Positions 1-21 (MSDNDDEWNGFSDDNGEDDGP) are enriched in acidic residues. 2 disordered regions span residues 1–38 (MSDN…WDVP) and 136–165 (DGWR…HTQH). A compositionally biased stretch (basic and acidic residues) spans 136-148 (DGWRFHSHPDPQH). The interval 172–520 (SLDTIAELSN…VQQNVEEMAK (349 aa)) is N-terminal acylcarrier protein transacylase domain (SAT). The segment at 625–836 (PLPSVEDNVA…AGAPGARVTR (212 aa)) is disordered. Residues 674–688 (TQGSQGSQGRRTPGS) show a composition bias toward low complexity. Residues 724 to 737 (PKRRGRPPGSKNKK) are compositionally biased toward basic residues. The Ketosynthase family 3 (KS3) domain maps to 737-1138 (KKDQAPAPAE…GANAHAILEA (402 aa)). The span at 764–777 (ASAPRRGLRAAPAA) shows a compositional bias: low complexity. Residues 802–816 (ATASTPRAQSDQGTG) show a composition bias toward polar residues. Residues Cys873, His1012, and His1058 each act as for beta-ketoacyl synthase activity in the active site. The tract at residues 1250–1573 (VFTGQGAQWP…VGTLLRQRDA (324 aa)) is malonyl-CoA:ACP transacylase (MAT) domain. The tract at residues 1644 to 1777 (NELLGTRIMD…ANLIISLGEP (134 aa)) is N-terminal hotdog fold. The PKS/mFAS DH domain maps to 1644–1947 (NELLGTRIMD…TKPLVPPTPS (304 aa)). Residues 1645–1941 (ELLGTRIMDN…QLQGLHTKPL (297 aa)) form a dehydratase (DH) domain region. The active-site Proton acceptor; for dehydratase activity is the His1676. Residues 1794-1947 (MLDVPAERFY…TKPLVPPTPS (154 aa)) are C-terminal hotdog fold. Asp1854 acts as the Proton donor; for dehydratase activity in catalysis. The segment at 2050–2241 (LNRFYIEALG…RNTGFSGADE (192 aa)) is methyltransferase (MT) domain. The ketoreductase (KR) domain stretch occupies residues 2794–2967 (TYWLVGLTGG…PAAAVNIGAV (174 aa)). Positions 3076-3153 (DASEILEDAY…ALFELVKERA (78 aa)) constitute a Carrier 1 domain. Ser3113 is subject to O-(pantetheine 4'-phosphoryl)serine. Positions 3164–3265 (EQPDQVKSPR…PVASSPDAGL (102 aa)) are disordered. Composition is skewed to polar residues over residues 3200 to 3209 (SLDQGSSWDS) and 3218 to 3233 (GHDS…SSPI). The interval 3268-3696 (SVPLSFSQAR…PISRISKPPL (429 aa)) is condensation (C) domain. An adenylation (A) domain region spans residues 3730–4113 (IQAHPDKLAL…GGLILEGRID (384 aa)). Positions 4236-4316 (EGLPAMQHLI…TMAALVASGS (81 aa)) constitute a Carrier 2 domain. Residues 4241-4313 (MQHLIKQLWE…TLETMAALVA (73 aa)) form a thiolation and peptide carrier (T) domain region. An O-(pantetheine 4'-phosphoryl)serine modification is found at Ser4276. The interval 4367 to 4598 (LTGSTGFLGR…ISVHTVAAAI (232 aa)) is reductase (R) domain.

The protein in the C-terminal section; belongs to the NRP synthetase family.

It functions in the pathway secondary metabolite biosynthesis. Functionally, PKS-NRPS hybrid synthetase; part of the gene cluster that mediates the biosynthesis of chaetoglobosin A which has a unique inhibitory activity against actin polymerization in mammalian cells. Chaetoglobosin A and its intermediates are involved in the morphological differentiation of C.globosum. The first step of the pathway is the synthesis of prochaetoglobosin I via condensation of one acetyl-CoA, 8 malonyl-CoA, and a L-tryptophan molecule by the PKS-NRPS hybrid synthetase cheA, followed by reduction of backbone double bond to install desired geometry by the enoyl reductase cheB. Further multiple oxidation steps performed by the cytochrome P450 monooxygenases cheE and cheG, as well as by the FAD-linked oxidoreductase cheF, lead to the formation of chaetoglobosin A. Depending on the order of action of these reductases, distinct intermediates can be identified. Within the pathway, the cytochrome P450 monooxygenase cheE catalyzes a stereospecific epoxidation on prochaetoglobosin I, cytoglobosin D, and chaetoglobosin J intermediates. The FAD-linked oxidoreductase cheF performs dehydrogenation of the C-20 hydroxyl groups in the 20-dihyrochaetoglobosin A and cytoglobosin D intermediates. Finally, the cytochrome P450 monooxygenase cheG can catalyze the stereospecific dihydroxylation of prochaetoglobosin I and prochaetoglobosin IV at C-19 and C-20, respectively. The Diels-Alderase cheD may play a role in the post-PKS-NRPS biosynthetic steps catalyzing Diels-Alder cyclization. In Chaetomium globosum (strain ATCC 6205 / CBS 148.51 / DSM 1962 / NBRC 6347 / NRRL 1970) (Soil fungus), this protein is PKS-NRPS hybrid synthetase cheA.